Reading from the N-terminus, the 81-residue chain is MERGVSYYLWIPFKFIHQTFGSLLLKLLGLRSPSDHSFPEDGEEEVKVVEVSSRGLPGKKNVLKKSRESSGKPGGTNKKPF.

A propeptide spanning residues 1–54 (MERGVSYYLWIPFKFIHQTFGSLLLKLLGLRSPSDHSFPEDGEEEVKVVEVSSR) is cleaved from the precursor. A disordered region spans residues 57 to 81 (PGKKNVLKKSRESSGKPGGTNKKPF).

This sequence belongs to the brassicaceae elicitor peptide family.

Elicitor of plant defense. This is Elicitor peptide 4 (PEP4) from Arabidopsis thaliana (Mouse-ear cress).